A 509-amino-acid chain; its full sequence is MALLLIIPISLVTLWLGYTLYQRLRFKLPPGPRPWPVVGNLYDIKPVRFRCFAEWAQSYGPIISVWFGSTLNVIVSNSELAKEVLKEHDQLLADRHRSRSAAKFSRDGKDLIWADYGPHYVKVRKVCTLELFSPKRLEALRPIREDEVTSMVDSVYNHCTSTENLGKGILLRKHLGVVAFNNITRLAFGKRFVNSEGVMDEQGVEFKAIVENGLKLGASLAMAEHIPWLRWMFPLEEGAFAKHGARRDRLTRAIMAEHTEARKKSGGAKQHFVDALLTLQDKYDLSEDTIIGLLWDMITAGMDTTAISVEWAMAELIRNPRVQQKVQEELDRVIGLERVMTEADFSNLPYLQCVTKEAMRLHPPTPLMLPHRANANVKVGGYDIPKGSNVHVNVWAVARDPAVWKDPLEFRPERFLEEDVDMKGHDFRLLPFGSGRRVCPGAQLGINLAASMLGHLLHHFCWTPPEGMKPEEIDMGENPGLVTYMRTPIQAVVSPRLPSHLYKRVPAEI.

The helical transmembrane segment at 2-21 (ALLLIIPISLVTLWLGYTLY) threads the bilayer. C439 lines the heme pocket.

Belongs to the cytochrome P450 family. Heme is required as a cofactor.

The protein localises to the membrane. The polypeptide is Cytochrome P450 98A2 (CYP98A2) (Glycine max (Soybean)).